Reading from the N-terminus, the 228-residue chain is Latherin (228 aa).

Positions 1–20 are cleaved as a signal peptide; it reads MLKVSCLFVLLCGLLVPSSA. C153 and C196 are joined by a disulfide.

Belongs to the BPI/LBP/Plunc superfamily. Plunc family. As to quaternary structure, monomer. No sign of N-X-[ST] acceptor site even though reported as N-glycosylated. As to expression, found in sweat (at protein level).

It is found in the secreted. In terms of biological role, major protein in sweat, has surfactant properties. Has a role in temperature regulation by having a capacity to make hydrophobic surfaces wettable and so can function in promoting spreading and evaporation of sweat. This is Latherin (LATH) from Equus caballus (Horse).